A 286-amino-acid chain; its full sequence is ATP synthase gamma chain (286 aa).

It belongs to the ATPase gamma chain family. In terms of assembly, F-type ATPases have 2 components, CF(1) - the catalytic core - and CF(0) - the membrane proton channel. CF(1) has five subunits: alpha(3), beta(3), gamma(1), delta(1), epsilon(1). CF(0) has three main subunits: a, b and c.

It is found in the cell inner membrane. In terms of biological role, produces ATP from ADP in the presence of a proton gradient across the membrane. The gamma chain is believed to be important in regulating ATPase activity and the flow of protons through the CF(0) complex. The polypeptide is ATP synthase gamma chain (Shewanella piezotolerans (strain WP3 / JCM 13877)).